We begin with the raw amino-acid sequence, 92 residues long: Large ribosomal subunit protein eL43 (92 aa).

A C4-type zinc finger spans residues Cys-39–Cys-60.

This sequence belongs to the eukaryotic ribosomal protein eL43 family.

This Pseudotsuga menziesii (Douglas-fir) protein is Large ribosomal subunit protein eL43 (RPL37A).